A 310-amino-acid chain; its full sequence is Homoserine kinase (310 aa).

91–101 (PIGSGLGSSAC) contacts ATP.

The protein belongs to the GHMP kinase family. Homoserine kinase subfamily.

It is found in the cytoplasm. The catalysed reaction is L-homoserine + ATP = O-phospho-L-homoserine + ADP + H(+). Its pathway is amino-acid biosynthesis; L-threonine biosynthesis; L-threonine from L-aspartate: step 4/5. Its function is as follows. Catalyzes the ATP-dependent phosphorylation of L-homoserine to L-homoserine phosphate. This Escherichia coli O81 (strain ED1a) protein is Homoserine kinase.